A 216-amino-acid polypeptide reads, in one-letter code: 3-keto-L-gulonate-6-phosphate decarboxylase UlaD (216 aa).

Aspartate 11 contacts substrate. The Mg(2+) site is built by glutamate 33 and aspartate 62. Arginine 192 contacts substrate.

The protein belongs to the HPS/KGPDC family. KGPDC subfamily. Homodimer. Mg(2+) is required as a cofactor.

The enzyme catalyses 3-dehydro-L-gulonate 6-phosphate + H(+) = L-xylulose 5-phosphate + CO2. The protein operates within cofactor degradation; L-ascorbate degradation; D-xylulose 5-phosphate from L-ascorbate: step 2/4. Functionally, catalyzes the decarboxylation of 3-keto-L-gulonate-6-P into L-xylulose-5-P. Is involved in the anaerobic L-ascorbate utilization. The protein is 3-keto-L-gulonate-6-phosphate decarboxylase UlaD of Escherichia coli O127:H6 (strain E2348/69 / EPEC).